The following is a 605-amino-acid chain: Dynein axonemal intermediate chain 2 (605 aa).

WD repeat units lie at residues 150–203, 208–246, 253–294, 301–347, 355–393, 399–437, and 443–481; these read KTIN…IWDL, KPEL…CWDT, AELS…WWDI, TEVV…SCNR, KIVC…IWSE, SIMW…IWDF, and DPTL…LLEV. The interval 568-605 is disordered; it reads IKLTPVPQQPSPEEDQVVEEGEEAAGEEGDEEVEEDLA. Over residues 579–605 the composition is skewed to acidic residues; sequence PEEDQVVEEGEEAAGEEGDEEVEEDLA.

Belongs to the dynein intermediate chain family. As to quaternary structure, consists of at least two heavy chains and a number of intermediate and light chains. Interacts with DNAAF2. Interacts with DNAAF6/PIH1D3. Interacts with HEATR2; probably involved in outer arm dynein assembly. Interacts with CFAP53. Highly expressed in trachea and testis. Expressed in respiratory ciliated cells (at protein level).

The protein resides in the cytoplasm. It localises to the cytoskeleton. Its subcellular location is the cilium axoneme. The protein localises to the dynein axonemal particle. In terms of biological role, part of the dynein complex of respiratory cilia. The sequence is that of Dynein axonemal intermediate chain 2 from Homo sapiens (Human).